A 499-amino-acid polypeptide reads, in one-letter code: Glycerol kinase (499 aa).

Thr12 contacts ADP. Residues Thr12, Thr13, and Ser14 each contribute to the ATP site. Position 12 (Thr12) interacts with sn-glycerol 3-phosphate. Arg16 provides a ligand contact to ADP. The sn-glycerol 3-phosphate site is built by Arg82, Glu83, Tyr134, and Asp245. The glycerol site is built by Arg82, Glu83, Tyr134, Asp245, and Gln246. ADP contacts are provided by Thr267 and Gly311. ATP-binding residues include Thr267, Gly311, Gln315, and Gly412. ADP is bound by residues Gly412 and Asn416.

Belongs to the FGGY kinase family.

It carries out the reaction glycerol + ATP = sn-glycerol 3-phosphate + ADP + H(+). Its pathway is polyol metabolism; glycerol degradation via glycerol kinase pathway; sn-glycerol 3-phosphate from glycerol: step 1/1. Its activity is regulated as follows. Inhibited by fructose 1,6-bisphosphate (FBP). Its function is as follows. Key enzyme in the regulation of glycerol uptake and metabolism. Catalyzes the phosphorylation of glycerol to yield sn-glycerol 3-phosphate. In Acidiphilium cryptum (strain JF-5), this protein is Glycerol kinase.